The primary structure comprises 214 residues: Thiamine-phosphate synthase (214 aa).

4-amino-2-methyl-5-(diphosphooxymethyl)pyrimidine-binding positions include 37–41 (QYREK) and Asn-73. Asp-74 and Asp-93 together coordinate Mg(2+). Ser-112 contacts 4-amino-2-methyl-5-(diphosphooxymethyl)pyrimidine. 2-[(2R,5Z)-2-carboxy-4-methylthiazol-5(2H)-ylidene]ethyl phosphate is bound at residue 139 to 141 (TIS). A 4-amino-2-methyl-5-(diphosphooxymethyl)pyrimidine-binding site is contributed by Lys-142. Residues Gly-171 and 191 to 192 (IS) contribute to the 2-[(2R,5Z)-2-carboxy-4-methylthiazol-5(2H)-ylidene]ethyl phosphate site.

Belongs to the thiamine-phosphate synthase family. It depends on Mg(2+) as a cofactor.

It catalyses the reaction 2-[(2R,5Z)-2-carboxy-4-methylthiazol-5(2H)-ylidene]ethyl phosphate + 4-amino-2-methyl-5-(diphosphooxymethyl)pyrimidine + 2 H(+) = thiamine phosphate + CO2 + diphosphate. The catalysed reaction is 2-(2-carboxy-4-methylthiazol-5-yl)ethyl phosphate + 4-amino-2-methyl-5-(diphosphooxymethyl)pyrimidine + 2 H(+) = thiamine phosphate + CO2 + diphosphate. The enzyme catalyses 4-methyl-5-(2-phosphooxyethyl)-thiazole + 4-amino-2-methyl-5-(diphosphooxymethyl)pyrimidine + H(+) = thiamine phosphate + diphosphate. The protein operates within cofactor biosynthesis; thiamine diphosphate biosynthesis; thiamine phosphate from 4-amino-2-methyl-5-diphosphomethylpyrimidine and 4-methyl-5-(2-phosphoethyl)-thiazole: step 1/1. Functionally, condenses 4-methyl-5-(beta-hydroxyethyl)thiazole monophosphate (THZ-P) and 2-methyl-4-amino-5-hydroxymethyl pyrimidine pyrophosphate (HMP-PP) to form thiamine monophosphate (TMP). This is Thiamine-phosphate synthase from Listeria monocytogenes serotype 4a (strain HCC23).